A 746-amino-acid chain; its full sequence is Exocyst complex component 3-like protein (746 aa).

Positions 1 to 23 (MDSAAKDEMQPALSPGPEWPEQE) are disordered. The interval 1 to 370 (MDSAAKDEMQ…DVSQLEPLLT (370 aa)) is mediates interaction with EXOC2, EXOC4 and EXOC5.

The protein belongs to the SEC6 family. As to quaternary structure, interacts with EXOC2, EXOC4 and EXOC5; may be part of the exocyst.

Its subcellular location is the cytoplasmic vesicle. The protein localises to the secretory vesicle. As part of the exocyst, may play a role in regulated exocytosis of insulin granules. This chain is Exocyst complex component 3-like protein (EXOC3L1), found in Homo sapiens (Human).